Reading from the N-terminus, the 318-residue chain is Taste receptor type 2 member 60 (318 aa).

Over 1–7 (MNGDHMV) the chain is Extracellular. The helical transmembrane segment at 8–28 (LGSSVTDKKAIILVTILLLLR) threads the bilayer. At 29-40 (LVAIAGNGFITA) the chain is on the cytoplasmic side. Residues 41 to 61 (ALGVEWVLRRMLLPCDKLLVS) form a helical membrane-spanning segment. Residues 62 to 88 (LGASRFCLQSVVMGKTIYVFLHPMAFP) are Extracellular-facing. A helical membrane pass occupies residues 89 to 109 (YNPVLQFLAFQWDFLNAATLW). Over 110 to 128 (SSTWLSVFYCVKIATFTHP) the chain is Cytoplasmic. Residues 129–149 (VFFWLKHKLSGWLPWMLFSSV) traverse the membrane as a helical segment. Over 150–183 (GLSSFTTILFFIGNHRMYQNYLRNHLQPWNVTGD) the chain is Extracellular. Asn-179 is a glycosylation site (N-linked (GlcNAc...) asparagine). The chain crosses the membrane as a helical span at residues 184-204 (SIRSYCEKFYLFPLKMITWTM). The Cytoplasmic portion of the chain corresponds to 205–234 (PTAVFFICMILLITSLGRHRKKALLTTSGF). A helical transmembrane segment spans residues 235 to 255 (REPSVQAHIKALLALLSFAML). The Extracellular portion of the chain corresponds to 256–264 (FISYFLSLV). The helical transmembrane segment at 265–285 (FSAAGIFPPLDFKFWVWESVI) threads the bilayer. Residues 286-318 (YLCAAVHPIILLFSNCRLRAVLKSRRSSRCGTP) are Cytoplasmic-facing.

This sequence belongs to the G-protein coupled receptor T2R family. In terms of tissue distribution, expressed in subsets of taste receptor cells of the tongue and exclusively in gustducin-positive cells.

The protein localises to the membrane. In terms of biological role, receptor that may play a role in the perception of bitterness and is gustducin-linked. May play a role in sensing the chemical composition of the gastrointestinal content. The activity of this receptor may stimulate alpha gustducin, mediate PLC-beta-2 activation and lead to the gating of TRPM5. This Homo sapiens (Human) protein is Taste receptor type 2 member 60 (TAS2R60).